We begin with the raw amino-acid sequence, 1369 residues long: Neurofascin (1369 aa).

A signal peptide spans 1–25 (MVLHSHQLTYAGIAFALCLHHLISA). At 26–1235 (IEVPLDSNIQ…NHVDIATQGW (1210 aa)) the chain is on the extracellular side. 2 consecutive Ig-like C2-type domains span residues 42–138 (PTIT…LQVS) and 144–231 (PKEK…NPYT). 2 cysteine pairs are disulfide-bonded: Cys64/Cys119 and Cys163/Cys214. Residues Asn241, Asn247, and Asn323 are each glycosylated (N-linked (GlcNAc...) asparagine). Ig-like C2-type domains lie at 262-350 (PSFM…ISVR), 355-442 (PYWL…AFVS), 448-535 (PRIL…VRLE), and 539-626 (PTRI…AYLT). Intrachain disulfides connect Cys286/Cys334 and Cys376/Cys426. 3 N-linked (GlcNAc...) asparagine glycosylation sites follow: Asn427, Asn464, and Asn501. Disulfide bonds link Cys470-Cys519 and Cys561-Cys610. Fibronectin type-III domains follow at residues 645-740 (RPRD…TSGA), 745-838 (NPTG…SGED), 843-945 (APTD…TPEG), and 949-1057 (SPRY…TPAS). Asn692 is a glycosylation site (N-linked (GlcNAc...) asparagine). The span at 730-739 (MPSERYQTSG) shows a compositional bias: polar residues. A disordered region spans residues 730–753 (MPSERYQTSGARPEINPTGVQGAG). 5 N-linked (GlcNAc...) asparagine glycosylation sites follow: Asn767, Asn793, Asn853, Asn994, and Asn1009. Residues 1078-1097 (TTATPTTETPPTEIPTTAIP) form a disordered region. N-linked (GlcNAc...) asparagine glycosylation is found at Asn1133, Asn1150, Asn1156, and Asn1171. The Fibronectin type-III 5 domain occupies 1133–1222 (NGSSIWDIRA…SYITFTTSSA (90 aa)). Residues 1236–1256 (FIGLMCAIALLVLILLIVCFI) form a helical membrane-spanning segment. Over 1257 to 1369 (KRSRGGKYPV…SPVNAIYSLA (113 aa)) the chain is Cytoplasmic. Composition is skewed to basic and acidic residues over residues 1266–1282 (VRDN…KNVE) and 1289–1298 (RSLESDEDNK). The interval 1266 to 1369 (VRDNKDEHLN…SPVNAIYSLA (104 aa)) is disordered. Residues 1300–1313 (LPNSQTSLDGTIKQ) are compositionally biased toward polar residues.

The protein belongs to the immunoglobulin superfamily. L1/neurofascin/NgCAM family. In terms of processing, N-glycosylated and O-glycosylated. Post-translationally, may be proteolytically cleaved at Arg-636.

The protein resides in the cell membrane. Functionally, cell adhesion, ankyrin-binding protein which may be involved in neurite extension, axonal guidance, synaptogenesis, myelination and neuron-glial cell interactions. The chain is Neurofascin (NFASC) from Gallus gallus (Chicken).